The sequence spans 375 residues: 23S rRNA (uracil(747)-C(5))-methyltransferase RlmC (375 aa).

[4Fe-4S] cluster contacts are provided by Cys-3, Cys-11, Cys-14, and Cys-87. Residues Gln-212, Phe-241, Glu-262, and Asn-307 each coordinate S-adenosyl-L-methionine. The active-site Nucleophile is Cys-334.

It belongs to the class I-like SAM-binding methyltransferase superfamily. RNA M5U methyltransferase family. RlmC subfamily.

The enzyme catalyses uridine(747) in 23S rRNA + S-adenosyl-L-methionine = 5-methyluridine(747) in 23S rRNA + S-adenosyl-L-homocysteine + H(+). In terms of biological role, catalyzes the formation of 5-methyl-uridine at position 747 (m5U747) in 23S rRNA. The protein is 23S rRNA (uracil(747)-C(5))-methyltransferase RlmC of Shigella sonnei (strain Ss046).